A 406-amino-acid polypeptide reads, in one-letter code: Argininosuccinate synthase (406 aa).

8–16 is a binding site for ATP; it reads AYSGGLDTS. Y86 provides a ligand contact to L-citrulline. An ATP-binding site is contributed by G116. 3 residues coordinate L-aspartate: T118, N122, and D123. N122 is an L-citrulline binding site. L-citrulline contacts are provided by R126, S174, S183, E259, and Y271.

This sequence belongs to the argininosuccinate synthase family. Type 1 subfamily. Homotetramer.

The protein localises to the cytoplasm. The catalysed reaction is L-citrulline + L-aspartate + ATP = 2-(N(omega)-L-arginino)succinate + AMP + diphosphate + H(+). It participates in amino-acid biosynthesis; L-arginine biosynthesis; L-arginine from L-ornithine and carbamoyl phosphate: step 2/3. This Dehalococcoides mccartyi (strain ATCC BAA-2266 / KCTC 15142 / 195) (Dehalococcoides ethenogenes (strain 195)) protein is Argininosuccinate synthase.